Reading from the N-terminus, the 502-residue chain is Alpha-globin transcription factor CP2 (502 aa).

The 238-residue stretch at 63 to 300 (EILPFQYVLC…SPGFNSSHSS (238 aa)) folds into the Grh/CP2 DB domain. A DNA-binding region spans residues 133-386 (EHQQLEGWRW…LFNALKGRMV (254 aa)). A compositionally biased stretch (basic and acidic residues) spans 241-265 (KGADRKQKIDREKMEKRTPHEKEKY). Disordered stretches follow at residues 241–268 (KGAD…YQPS) and 294–326 (FNSS…NLLP). At Ser353 the chain carries Phosphoserine.

It belongs to the grh/CP2 family. CP2 subfamily. As to quaternary structure, binds to DNA as a dimer. Interacts with UBP1 and PIAS1, and is probably part of a complex containing TFCP2, UBP1 and PIAS1. Component of the SSP (stage selector protein) complex, which appears to be a heteromer of TFCP2 and 2 copies of NFE4.

Its subcellular location is the nucleus. Binds a variety of cellular promoters including fibrinogen, alpha-globin promoters. Activation of the alpha-globin promoter in erythroid cells is via synergistic interaction with UBP1. Functions as part of the SSP (stage selector protein) complex. Facilitates the interaction of the gamma-globin genes with enhancer elements contained in the locus control region in fetal erythroid cells. Interacts by binding to the stage selector element (SSE) in the proximal gamma-globin promoter. The polypeptide is Alpha-globin transcription factor CP2 (Tfcp2) (Mus musculus (Mouse)).